A 230-amino-acid chain; its full sequence is N-(5'-phosphoribosyl)anthranilate isomerase (230 aa).

This sequence belongs to the TrpF family.

The enzyme catalyses N-(5-phospho-beta-D-ribosyl)anthranilate = 1-(2-carboxyphenylamino)-1-deoxy-D-ribulose 5-phosphate. The protein operates within amino-acid biosynthesis; L-tryptophan biosynthesis; L-tryptophan from chorismate: step 3/5. The chain is N-(5'-phosphoribosyl)anthranilate isomerase from Trichodesmium erythraeum (strain IMS101).